The primary structure comprises 648 residues: 1-deoxy-D-xylulose-5-phosphate synthase (648 aa).

Thiamine diphosphate contacts are provided by residues His-74 and 115 to 117; that span reads GHA. Mg(2+) is bound at residue Asp-146. Thiamine diphosphate-binding positions include 147-148, Asn-176, Tyr-292, and Glu-375; that span reads GA. Position 176 (Asn-176) interacts with Mg(2+).

It belongs to the transketolase family. DXPS subfamily. Homodimer. The cofactor is Mg(2+). Thiamine diphosphate is required as a cofactor.

It carries out the reaction D-glyceraldehyde 3-phosphate + pyruvate + H(+) = 1-deoxy-D-xylulose 5-phosphate + CO2. It participates in metabolic intermediate biosynthesis; 1-deoxy-D-xylulose 5-phosphate biosynthesis; 1-deoxy-D-xylulose 5-phosphate from D-glyceraldehyde 3-phosphate and pyruvate: step 1/1. In terms of biological role, catalyzes the acyloin condensation reaction between C atoms 2 and 3 of pyruvate and glyceraldehyde 3-phosphate to yield 1-deoxy-D-xylulose-5-phosphate (DXP). In Synechococcus sp. (strain JA-2-3B'a(2-13)) (Cyanobacteria bacterium Yellowstone B-Prime), this protein is 1-deoxy-D-xylulose-5-phosphate synthase.